The sequence spans 439 residues: Actin-related protein 3 (439 aa).

The interval 40–71 is disordered; that stretch reads PSAGTGGSGSGRPAVANKPSFLTGGAGPGGHL.

The protein belongs to the actin family. ARP3 subfamily. In terms of assembly, component of the Arp2/3 complex composed.

It localises to the cytoplasm. The protein localises to the cytoskeleton. In terms of biological role, functions as ATP-binding component of the Arp2/3 complex which is involved in regulation of actin polymerization and together with an activating nucleation-promoting factor (NPF) mediates the formation of branched actin networks. Seems to contact the pointed end of the daughter actin filament. This is Actin-related protein 3 (arp-3) from Neurospora crassa (strain ATCC 24698 / 74-OR23-1A / CBS 708.71 / DSM 1257 / FGSC 987).